The chain runs to 579 residues: Kelch repeat and BTB domain-containing protein F47D12.7 (579 aa).

The BTB domain maps to 51–119 (PTVTLVLRNN…PKAFEQGIKP (69 aa)). Kelch repeat units lie at residues 266-316 (AIVC…VVED), 317-363 (KLIV…RVND), 369-415 (LVFA…TIDN), 417-463 (IVAI…SIMN), 465-511 (VCMI…QMDT), and 513-559 (YVYV…TLSD).

The polypeptide is Kelch repeat and BTB domain-containing protein F47D12.7 (Caenorhabditis elegans).